The primary structure comprises 510 residues: Ectonucleoside triphosphate diphosphohydrolase 1 (510 aa).

Residues 1 to 16 lie on the Cytoplasmic side of the membrane; the sequence is MEDIKDSKVKRFCSKN. The chain crosses the membrane as a helical span at residues 17 to 37; it reads ILIILGFTSILAVIALIAVGL. Over 38 to 478 the chain is Extracellular; the sequence is TQNKPLPENV…SPPLPHSTYI (441 aa). Asn73 is a glycosylation site (N-linked (GlcNAc...) asparagine). Cys84 and Cys108 are joined by a disulfide. Glu174 serves as the catalytic Proton acceptor. Residues Asn226, Asn291, and Asn333 are each glycosylated (N-linked (GlcNAc...) asparagine). 2 disulfides stabilise this stretch: Cys254-Cys300 and Cys281-Cys324. 2 cysteine pairs are disulfide-bonded: Cys337–Cys342 and Cys391–Cys414. Residues Asn428 and Asn457 are each glycosylated (N-linked (GlcNAc...) asparagine). The helical transmembrane segment at 479–499 threads the bilayer; sequence GLMVLFSLLLVAVAITGLFIY. The Cytoplasmic segment spans residues 500–510; sequence SKPSYFWKEAV.

This sequence belongs to the GDA1/CD39 NTPase family. In terms of assembly, homodimer; disulfide-linked. Requires Ca(2+) as cofactor. Mg(2+) is required as a cofactor. In terms of processing, N-glycosylated. Post-translationally, the N-terminus is blocked. Palmitoylated on Cys-13; which is required for caveola targeting.

It is found in the membrane. Its subcellular location is the caveola. The enzyme catalyses a ribonucleoside 5'-triphosphate + 2 H2O = a ribonucleoside 5'-phosphate + 2 phosphate + 2 H(+). The catalysed reaction is a ribonucleoside 5'-triphosphate + H2O = a ribonucleoside 5'-diphosphate + phosphate + H(+). It catalyses the reaction a ribonucleoside 5'-diphosphate + H2O = a ribonucleoside 5'-phosphate + phosphate + H(+). It carries out the reaction ATP + 2 H2O = AMP + 2 phosphate + 2 H(+). The enzyme catalyses ATP + H2O = ADP + phosphate + H(+). The catalysed reaction is ADP + H2O = AMP + phosphate + H(+). It catalyses the reaction CTP + 2 H2O = CMP + 2 phosphate + 2 H(+). It carries out the reaction CTP + H2O = CDP + phosphate + H(+). The enzyme catalyses CDP + H2O = CMP + phosphate + H(+). The catalysed reaction is GTP + 2 H2O = GMP + 2 phosphate + 2 H(+). It catalyses the reaction GTP + H2O = GDP + phosphate + H(+). It carries out the reaction GDP + H2O = GMP + phosphate + H(+). The enzyme catalyses ITP + 2 H2O = IMP + 2 phosphate + 2 H(+). The catalysed reaction is ITP + H2O = IDP + phosphate + H(+). It catalyses the reaction IDP + H2O = IMP + phosphate + H(+). It carries out the reaction UTP + 2 H2O = UMP + 2 phosphate + 2 H(+). The enzyme catalyses UTP + H2O = UDP + phosphate + H(+). The catalysed reaction is UDP + H2O = UMP + phosphate + H(+). Functionally, catalyzes the hydrolysis of both di- and triphosphate nucleotides (NDPs and NTPs) and hydrolyze NTPs to nucleotide monophosphates (NMPs) in two distinct successive phosphate-releasing steps, with NDPs as intermediates and participates in the regulation of extracellular levels of nucleotides. By hydrolyzing proinflammatory ATP and platelet-activating ADP to AMP, it blocks platelet aggregation and supports blood flow. The protein is Ectonucleoside triphosphate diphosphohydrolase 1 of Mus musculus (Mouse).